Consider the following 86-residue polypeptide: Small ribosomal subunit protein bS20 (86 aa).

This sequence belongs to the bacterial ribosomal protein bS20 family.

Its function is as follows. Binds directly to 16S ribosomal RNA. The protein is Small ribosomal subunit protein bS20 of Rhodococcus erythropolis (strain PR4 / NBRC 100887).